Here is a 634-residue protein sequence, read N- to C-terminus: Sodium-dependent multivitamin transporter (634 aa).

12 helical membrane passes run 23-43 (FSVV…VIGL), 65-85 (MGCL…VAIL), 100-120 (FLGC…IPVF), 142-162 (ICGT…ALYA), 175-195 (LWLS…LGGL), 207-227 (LIMF…VGGL), 255-275 (FWTL…VNQA), 295-315 (AVFP…LVMF), 350-370 (LPGL…SSAF), 403-423 (FAYG…GSVL), 427-447 (LSIF…GMFF), and 455-475 (AIVG…GSIV). Residues N488 and N497 are each glycosylated (N-linked (GlcNAc...) asparagine). Residues 526–546 (LWYSAHNSTTVIAVGLIVSLL) traverse the membrane as a helical segment.

The protein belongs to the sodium:solute symporter (SSF) (TC 2.A.21) family. Interacts with PDZD11. In terms of tissue distribution, expressed in the jejunum (at protein level). Expressed in lung, skeletal muscle, heart, brain, kidney, intestine, liver, and placenta.

Its subcellular location is the cell membrane. The protein resides in the apical cell membrane. It catalyses the reaction biotin(out) + 2 Na(+)(out) = biotin(in) + 2 Na(+)(in). The catalysed reaction is (R)-pantothenate(out) + 2 Na(+)(out) = (R)-pantothenate(in) + 2 Na(+)(in). It carries out the reaction (R)-lipoate(out) + 2 Na(+)(out) = (R)-lipoate(in) + 2 Na(+)(in). The enzyme catalyses iodide(out) + 2 Na(+)(out) = iodide(in) + 2 Na(+)(in). In terms of biological role, sodium-dependent multivitamin transporter that mediates the electrogenic transport of pantothenate, biotin, lipoate and iodide. Functions as a Na(+)-coupled substrate symporter where the stoichiometry of Na(+):substrate is 2:1, creating an electrochemical Na(+) gradient used as driving force for substrate uptake. Required for biotin and pantothenate uptake in the intestine across the brush border membrane. Plays a role in the maintenance of intestinal mucosa integrity, by providing the gut mucosa with biotin. Contributes to the luminal uptake of biotin and pantothenate into the brain across the blood-brain barrier. The protein is Sodium-dependent multivitamin transporter of Rattus norvegicus (Rat).